Reading from the N-terminus, the 331-residue chain is D-alanine--D-alanine ligase (331 aa).

The ATP-grasp domain maps to Lys116 to Ala316. Ala142–Thr197 contacts ATP. Asp269, Glu283, and Asn285 together coordinate Mg(2+).

The protein belongs to the D-alanine--D-alanine ligase family. Mg(2+) serves as cofactor. Mn(2+) is required as a cofactor.

It localises to the cytoplasm. It catalyses the reaction 2 D-alanine + ATP = D-alanyl-D-alanine + ADP + phosphate + H(+). The protein operates within cell wall biogenesis; peptidoglycan biosynthesis. Its function is as follows. Cell wall formation. The protein is D-alanine--D-alanine ligase of Ralstonia nicotianae (strain ATCC BAA-1114 / GMI1000) (Ralstonia solanacearum).